Here is a 536-residue protein sequence, read N- to C-terminus: Protein Rep68 (536 aa).

One can recognise a PV NS1-Nuc domain in the interval 1 to 199; sequence MPGFYEIVIK…AQHLTHVSQT (199 aa). A divalent metal cation contacts are provided by glutamate 83, histidine 90, and histidine 92. The RCR-2 signature appears at 90–92; that stretch reads HMH. Tyrosine 156 (for nuclease activity) is an active-site residue. The RCR-3 motif lies at 156-160; that stretch reads YLLPK. Residues 196-211 are compositionally biased toward polar residues; it reads VSQTQEQNKENQNPNS. The segment at 196–216 is disordered; the sequence is VSQTQEQNKENQNPNSDAPVI. One can recognise an SF3 helicase domain in the interval 308 to 463; sequence DPQYAASVFL…LDHDFGKVTK (156 aa). 334-341 is a binding site for ATP; that stretch reads GPATTGKT. The tract at residues 488-536 is disordered; that stretch reads KGGAKKRPAPSDADISEPKRVRESVAQPSTSDAEASINYADRLARGHSL.

As to quaternary structure, interacts with host TOPORS. Interacts with host KCTD5. The cofactor is a divalent metal cation.

Its subcellular location is the host nucleus. It carries out the reaction ATP + H2O = ADP + phosphate + H(+). Functionally, plays an essential role in the initiation of viral DNA synthesis. Binds specifically to an inverted terminal repeat element (ITR) on the 3' and 5' ends of the viral DNA, where it cleaves a site specifically to generate a priming site for initiation of the synthesis of a complementary strand. Also plays a role as transcriptional regulator, DNA helicase and as key factor in site-specific integration of the viral genome. Inhibits the host cell cycle G1/S and G2/M transitions. These arrests may provide essential cellular factors for viral DNA replication. The polypeptide is Protein Rep68 (Rep68) (Mammalia (AAV-2)).